The following is a 959-amino-acid chain: Protein NLP7 (959 aa).

The disordered stretch occupies residues 1-22 (MCEPDDNSARNGVTTQPSRSRE). Polar residues predominate over residues 9 to 18 (ARNGVTTQPS). An RWP-RK domain is found at 578 to 659 (KKKTEKKRGK…IESVQGTDGG (82 aa)). The stretch at 633–654 (SRKIKKVNRSITKLKRVIESVQ) forms a coiled coil. 3 stretches are compositionally biased toward polar residues: residues 673–687 (THGQTSAQPLNSPNG), 694–703 (PNTNNSPNHW), and 735–745 (GTPTSHGSCDG). The disordered stretch occupies residues 673 to 760 (THGQTSAQPL…PKVPNQDPLF (88 aa)). The PB1 domain occupies 863–945 (TVTIKASYKD…KIVRLLVHDV (83 aa)).

Interacts with NRG2. Expressed in roots, stems, leaves, flowers and siliques. Detected in root hairs, emerging secondary roots, vascular tissues, leaf parenchyma cells and stomata.

The protein localises to the nucleus. Transcription factor involved in regulation of nitrate assimilation and in transduction of the nitrate signal. This is Protein NLP7 (NLP7) from Arabidopsis thaliana (Mouse-ear cress).